Here is a 263-residue protein sequence, read N- to C-terminus: Polyglutamine-binding protein 1 (263 aa).

The WW domain occupies 46–80 (EGLPPSWYKVFDPSCGLPYYWNVDTDLVSWLSPHD). Serine 94 is subject to Phosphoserine. The interval 94–263 (SSNADAEEKL…AEASRTKQQD (170 aa)) is disordered. Positions 99–173 (AEEKLDRSHE…DKVDREESKE (75 aa)) are enriched in basic and acidic residues. 14 consecutive repeat copies span residues 104–110 (DRSHEKS), 111–117 (DRGHEKS), 118–124 (DRGHEKS), 125–131 (DRSHEKS), 132–138 (ERNHEKS), 139–140 (DR), 141–142 (DR), 143–144 (ER), 150–151 (DR), 152–153 (ER), 154–155 (ER), 156–157 (DR), 158–159 (DR), and 160–161 (DR). Residues 104–138 (DRSHEKSDRGHEKSDRGHEKSDRSHEKSERNHEKS) are 5 X 7 AA approximate tandem repeats of D-R-[SG]-H-D-K-S. The tract at residues 139–144 (DRDRER) is 3 X 2 AA tandem repeats of [DE]-R. The tract at residues 150–161 (DRERERDRDRDR) is 6 X 2 AA tandem repeats of [DE]-R. Residues 243-253 (YPSPGAVLRAN) form an important for interaction with TXNL4A region. Residue serine 245 is modified to Phosphoserine.

In terms of assembly, interacts with POU3F2/Brn-2, ATXN1, TXNL4A, HTT and AR. Interaction with ATXN1 correlates positively with the length of the polyglutamine tract. Interacts with RNA polymerase II large subunit in a phosphorylation-dependent manner. Forms a ternary complex with ATXN1 mutant and phosphorylated RNA polymerase II. Interacts (via C-terminus) with TXNL4A and CD2BP2. Interacts (via WW domain) with ATN1 and SF3B1, and may interact with additional splice factors. Interacts (via WW domain) with WBP11; Leading to reduce interaction between PQBP1 and TXNL4A. Interacts with CAPRIN1. Interacts with DDX1. Interacts with SFPQ. Interacts with KHSRP.

It is found in the nucleus. Its subcellular location is the nucleus speckle. The protein localises to the cytoplasmic granule. In terms of biological role, intrinsically disordered protein that acts as a scaffold, and which is involved in different processes, such as pre-mRNA splicing, transcription regulation, innate immunity and neuron development. Interacts with splicing-related factors via the intrinsically disordered region and regulates alternative splicing of target pre-mRNA species. May suppress the ability of POU3F2 to transactivate the DRD1 gene in a POU3F2 dependent manner. Can activate transcription directly or via association with the transcription machinery. May be involved in ATXN1 mutant-induced cell death. The interaction with ATXN1 mutant reduces levels of phosphorylated RNA polymerase II large subunit. Involved in the assembly of cytoplasmic stress granule, possibly by participating in the transport of neuronal RNA granules. Also acts as an innate immune sensor of infection by retroviruses, by detecting the presence of reverse-transcribed DNA in the cytosol. Directly binds retroviral reverse-transcribed DNA in the cytosol and interacts with CGAS, leading to activate the cGAS-STING signaling pathway, triggering type-I interferon production. This Bos taurus (Bovine) protein is Polyglutamine-binding protein 1 (PQBP1).